A 180-amino-acid polypeptide reads, in one-letter code: FMN reductase (NADH) RutF (180 aa).

The protein belongs to the non-flavoprotein flavin reductase family. RutF subfamily.

The catalysed reaction is FMNH2 + NAD(+) = FMN + NADH + 2 H(+). Functionally, catalyzes the reduction of FMN to FMNH2 which is used to reduce pyrimidine by RutA via the Rut pathway. The protein is FMN reductase (NADH) RutF of Variovorax paradoxus (strain S110).